The sequence spans 160 residues: Lipoprotein signal peptidase (160 aa).

The next 3 helical transmembrane spans lie at 7 to 27 (VIYYLLAAAVIALDQWTKWLV), 61 to 81 (GQFWLFYLVTVIVVAGIIIYI), and 91 to 111 (AGIGLGLMLGGAIGNFIDRVF). Catalysis depends on residues D117 and D135. A helical transmembrane segment spans residues 133–153 (IADSALTVGVILLFIHMFFFA).

The protein belongs to the peptidase A8 family.

The protein localises to the cell membrane. The catalysed reaction is Release of signal peptides from bacterial membrane prolipoproteins. Hydrolyzes -Xaa-Yaa-Zaa-|-(S,diacylglyceryl)Cys-, in which Xaa is hydrophobic (preferably Leu), and Yaa (Ala or Ser) and Zaa (Gly or Ala) have small, neutral side chains.. It functions in the pathway protein modification; lipoprotein biosynthesis (signal peptide cleavage). In terms of biological role, this protein specifically catalyzes the removal of signal peptides from prolipoproteins. The sequence is that of Lipoprotein signal peptidase from Geobacillus thermodenitrificans (strain NG80-2).